A 348-amino-acid chain; its full sequence is Histidinol-phosphate aminotransferase (348 aa).

Lysine 211 is subject to N6-(pyridoxal phosphate)lysine.

Belongs to the class-II pyridoxal-phosphate-dependent aminotransferase family. Histidinol-phosphate aminotransferase subfamily. Homodimer. Pyridoxal 5'-phosphate serves as cofactor.

The enzyme catalyses L-histidinol phosphate + 2-oxoglutarate = 3-(imidazol-4-yl)-2-oxopropyl phosphate + L-glutamate. It functions in the pathway amino-acid biosynthesis; L-histidine biosynthesis; L-histidine from 5-phospho-alpha-D-ribose 1-diphosphate: step 7/9. The sequence is that of Histidinol-phosphate aminotransferase from Chlorobaculum tepidum (strain ATCC 49652 / DSM 12025 / NBRC 103806 / TLS) (Chlorobium tepidum).